The chain runs to 1093 residues: Leucine-rich repeats and immunoglobulin-like domains protein 1 (1093 aa).

Positions 1-34 are cleaved as a signal peptide; it reads MARPVRGGLGAPRRSPCLLLLWLLLLRLEPVTAA. The 34-residue stretch at 35–68 folds into the LRRNT domain; sequence AGPRAPCAAACTCAGDSLDCGGRGLAALPGDLPS. The Extracellular segment spans residues 35 to 794; the sequence is AGPRAPCAAA…GCRKDGTTVG (760 aa). A disulfide bond links Cys45 and Cys54. LRR repeat units lie at residues 69 to 90, 93 to 114, 116 to 137, 140 to 161, 164 to 185, 189 to 210, 212 to 233, 236 to 257, 260 to 281, 284 to 305, 308 to 329, 332 to 353, 356 to 378, 383 to 404, and 407 to 428; these read WTRS…GFED, NLQE…GAAS, HVVS…QLKA, SLEV…CFPH, PIKE…AFDG, SLLT…AFKL, RLTQ…TFQG, SLEV…AFWG, KMHV…SLYG, ALHQ…GWSF, KLHE…SLAE, SLSV…AFKG, SLRV…SGAF, SLSK…AFSG, and GLEH…AFVK. Asn74 carries N-linked (GlcNAc...) asparagine glycosylation. Asn150 is a glycosylation site (N-linked (GlcNAc...) asparagine). The N-linked (GlcNAc...) asparagine glycan is linked to Asn246. 2 N-linked (GlcNAc...) asparagine glycosylation sites follow: Asn292 and Asn318. The LRRCT domain maps to 440–491; it reads DSFLCDCQLKWLPPWLIGRMLQAFVTATCAHPESLKGQSIFSVPPESFVCDD. 4 disulfide bridges follow: Cys444–Cys468, Cys446–Cys489, Cys516–Cys577, and Cys620–Cys672. 3 Ig-like C2-type domains span residues 495 to 594, 599 to 688, and 693 to 779; these read PQII…ARLT, PSFT…ATLT, and PSLV…SQLS. The N-linked (GlcNAc...) asparagine glycan is linked to Asn684. A disulfide bridge connects residues Cys714 and Cys763. Residues 795–815 traverse the membrane as a helical segment; that stretch reads IFTIAVVSSIVLTSLVWVCII. At 816 to 1093 the chain is on the cytoplasmic side; it reads YQTRKKSEEY…RVPLLLAPKS (278 aa). Disordered regions lie at residues 946-983 and 1063-1093; these read AFHP…CSRT and PKAC…APKS.

In terms of assembly, interacts (via extracellular LRR and Ig-like domains) with EGFR/ERBB1, ERBB2, ERBB3 and ERBB4 (via extracellular domain). The physiological relevance of the interaction is controversial; LRIG1 may have low affinity for EGFR, and interaction may occur only when high levels of both proteins are present. Widely expressed.

It localises to the cell membrane. In terms of biological role, acts as a feedback negative regulator of signaling by receptor tyrosine kinases, through a mechanism that involves enhancement of receptor ubiquitination and accelerated intracellular degradation. In Homo sapiens (Human), this protein is Leucine-rich repeats and immunoglobulin-like domains protein 1.